The chain runs to 336 residues: Hdr-like menaquinol oxidoreductase cytochrome b-like subunit (336 aa).

6 consecutive transmembrane segments (helical) span residues 4–24 (ALYI…IGTI), 60–80 (IDSP…VFLF), 102–122 (WLWL…IRHL), 145–165 (VAIV…LAFL), 184–204 (HLIL…RYII), and 232–252 (LHWL…YIPF).

The protein localises to the cell membrane. Functionally, has menaquinol-oxidizing activity. The HmeC and HmeD subunits may together mediate electron transfer from menaquinol to an unidentified electron acceptor on the cytoplasmic side of the membrane. This Archaeoglobus profundus (strain DSM 5631 / JCM 9629 / NBRC 100127 / Av18) protein is Hdr-like menaquinol oxidoreductase cytochrome b-like subunit (hmeC).